We begin with the raw amino-acid sequence, 75 residues long: Large ribosomal subunit protein bL32c (75 aa).

Positions 49-75 (SPGPTTPIKPNPKKQTGRRPRSQRRRT) are disordered. A compositionally biased stretch (basic residues) spans 59–75 (NPKKQTGRRPRSQRRRT).

The protein belongs to the bacterial ribosomal protein bL32 family.

It localises to the plastid. It is found in the chloroplast. This chain is Large ribosomal subunit protein bL32c, found in Nephroselmis olivacea (Green alga).